The chain runs to 337 residues: Lipoate-protein ligase A (337 aa).

One can recognise a BPL/LPL catalytic domain in the interval 29–216; that stretch reads DQNQTILFLW…AFFNYYQTTV (188 aa). ATP contacts are provided by residues arginine 71, 76–79, and lysine 134; that span reads GAVF. Lysine 134 is a binding site for (R)-lipoate.

This sequence belongs to the LplA family. Monomer.

The protein resides in the cytoplasm. The enzyme catalyses L-lysyl-[lipoyl-carrier protein] + (R)-lipoate + ATP = N(6)-[(R)-lipoyl]-L-lysyl-[lipoyl-carrier protein] + AMP + diphosphate + H(+). The protein operates within protein modification; protein lipoylation via exogenous pathway; protein N(6)-(lipoyl)lysine from lipoate: step 1/2. It functions in the pathway protein modification; protein lipoylation via exogenous pathway; protein N(6)-(lipoyl)lysine from lipoate: step 2/2. In terms of biological role, catalyzes both the ATP-dependent activation of exogenously supplied lipoate to lipoyl-AMP and the transfer of the activated lipoyl onto the lipoyl domains of lipoate-dependent enzymes. The polypeptide is Lipoate-protein ligase A (Blochmanniella floridana).